Reading from the N-terminus, the 605-residue chain is MADMKQEEDELAVDPGVGAVCDPVTKLRFEAIVCLLDRIPITLQQIDMFGQDVAFRTKRIGNIEALLDFLKGSAAATWGARAGAGEPIDASSPELHRLVEDAETAYRDVRGLQPRMVVQMPRVFHKVCLPKLHQLLVIARRLLAQNVALRRLLLQPVGCDVSPMALAEAAVSSDDFERHGRNKVVIDEFGYEDLLRRRHTGHESQNDADDAEQHGREVREGEYEDLILMRHRDTSHELLQDDARRRRADAEAEQQGGDGEVRDEYEDYLCRQLGAVYSGPDQIYEHDMRGPEPAHSPNTPDQIYVPCERMLPYPSNCDNAEDRIHMACLALKNLVKDMEGIYSPRGTLWQYLEDVISLAHALFLENTKLHRFTDQASHQDLPLQPPQGFPFQQQPQHDGYQQPGVPFQQPQQGGYYGHGQGIMFQRGGYLQDVPFQHWQWQQGGYGQGFMFPQAQHQGGYGQGFLSEQPLPGDPSFMNMQAPYDGDGGVLFQKPQHYHHGHVPSEKGAIQAKGKQKMREPKTVMCPDWCRTGHCSSGDGCEYAHSQDELRVIDARPKYRTEPCRYWLAGKGCWYGDKCRYKQHRLAREPLYVDPFLTGHELRNKT.

Disordered regions lie at residues Arg-198–Val-218, Leu-238–Val-261, and Gln-375–Pro-403. Basic and acidic residues-rich tracts occupy residues Gly-201–Val-218 and Leu-238–Ala-250. A compositionally biased stretch (low complexity) spans Phe-389 to Pro-403. 2 C3H1-type zinc fingers span residues Glu-519 to Asp-547 and Lys-557 to Leu-585.

This is Putative zinc finger CCCH domain-containing protein 57 from Oryza sativa subsp. japonica (Rice).